Consider the following 154-residue polypeptide: Protein E6 (154 aa).

Zinc fingers lie at residues 34–70 and 107–143; these read CVFCKKALTASEVYNFAYTDLRVVYRDGYPYGVCKFC and CYRCQHPLTPEEKQLHCDYKKRFHKISHMWTGSCLTC.

The protein belongs to the papillomaviridae E6 protein family. As to quaternary structure, forms homodimers. Interacts with ubiquitin-protein ligase UBE3A/E6-AP; this interaction stimulates UBE3A ubiquitin activity. Interacts with host TP53 and EP300; this interaction inhibits TP53 activity.

Its subcellular location is the host cytoplasm. The protein localises to the host nucleus. Plays a major role in the induction and maintenance of cellular transformation. E6 associates with host UBE3A/E6-AP ubiquitin-protein ligase and modulates its activity. Sequesters tumor suppressor TP53 in the host cytoplasm and modulates its activity by interacting with host EP300 that results in the reduction of TP53 acetylation and activation. In turn, apoptosis induced by DNA damage is inhibited. E6 also protects host keratinocytes from apoptosis by mediating the degradation of host BAK1. May also inhibit host immune response. This Human papillomavirus type 53 protein is Protein E6.